The following is a 217-amino-acid chain: Small ribosomal subunit protein uS3c (217 aa).

The 71-residue stretch at 39 to 109 (IRSCIEKQLH…QIRINLIEIT (71 aa)) folds into the KH type-2 domain.

Belongs to the universal ribosomal protein uS3 family. In terms of assembly, part of the 30S ribosomal subunit.

The protein localises to the plastid. Its subcellular location is the chloroplast. This is Small ribosomal subunit protein uS3c (rps3) from Gracilaria tenuistipitata var. liui (Red alga).